A 472-amino-acid chain; its full sequence is ATP synthase subunit beta (472 aa).

155-162 (GGAGVGKT) is an ATP binding site.

This sequence belongs to the ATPase alpha/beta chains family. As to quaternary structure, F-type ATPases have 2 components, CF(1) - the catalytic core - and CF(0) - the membrane proton channel. CF(1) has five subunits: alpha(3), beta(3), gamma(1), delta(1), epsilon(1). CF(0) has three main subunits: a(1), b(2) and c(9-12). The alpha and beta chains form an alternating ring which encloses part of the gamma chain. CF(1) is attached to CF(0) by a central stalk formed by the gamma and epsilon chains, while a peripheral stalk is formed by the delta and b chains.

Its subcellular location is the cell membrane. The enzyme catalyses ATP + H2O + 4 H(+)(in) = ADP + phosphate + 5 H(+)(out). In terms of biological role, produces ATP from ADP in the presence of a proton gradient across the membrane. The catalytic sites are hosted primarily by the beta subunits. This is ATP synthase subunit beta from Fervidobacterium islandicum.